A 447-amino-acid polypeptide reads, in one-letter code: GTPase Der (447 aa).

EngA-type G domains are found at residues 3–167 (PVIA…FAER) and 181–354 (TRIA…AAAM). GTP contacts are provided by residues 9 to 16 (GRPNVGKS), 56 to 60 (DTGGF), 119 to 122 (NKAE), 187 to 194 (GRPNVGKS), 234 to 238 (DTAGL), and 299 to 302 (NKWD). A KH-like domain is found at 355–439 (VKLPTPKLTR…PLRIEFRTNK (85 aa)).

Belongs to the TRAFAC class TrmE-Era-EngA-EngB-Septin-like GTPase superfamily. EngA (Der) GTPase family. In terms of assembly, associates with the 50S ribosomal subunit.

Its function is as follows. GTPase that plays an essential role in the late steps of ribosome biogenesis. This chain is GTPase Der, found in Ralstonia pickettii (strain 12J).